A 235-amino-acid chain; its full sequence is Phosphoribosylaminoimidazole-succinocarboxamide synthase (235 aa).

Belongs to the SAICAR synthetase family.

It catalyses the reaction 5-amino-1-(5-phospho-D-ribosyl)imidazole-4-carboxylate + L-aspartate + ATP = (2S)-2-[5-amino-1-(5-phospho-beta-D-ribosyl)imidazole-4-carboxamido]succinate + ADP + phosphate + 2 H(+). Its pathway is purine metabolism; IMP biosynthesis via de novo pathway; 5-amino-1-(5-phospho-D-ribosyl)imidazole-4-carboxamide from 5-amino-1-(5-phospho-D-ribosyl)imidazole-4-carboxylate: step 1/2. The protein is Phosphoribosylaminoimidazole-succinocarboxamide synthase of Lachnoclostridium phytofermentans (strain ATCC 700394 / DSM 18823 / ISDg) (Clostridium phytofermentans).